The sequence spans 295 residues: Bifunctional protein FolD (295 aa).

Residues 166-168 (GRS), Ser191, and Ile232 contribute to the NADP(+) site.

The protein belongs to the tetrahydrofolate dehydrogenase/cyclohydrolase family. Homodimer.

The enzyme catalyses (6R)-5,10-methylene-5,6,7,8-tetrahydrofolate + NADP(+) = (6R)-5,10-methenyltetrahydrofolate + NADPH. The catalysed reaction is (6R)-5,10-methenyltetrahydrofolate + H2O = (6R)-10-formyltetrahydrofolate + H(+). It functions in the pathway one-carbon metabolism; tetrahydrofolate interconversion. In terms of biological role, catalyzes the oxidation of 5,10-methylenetetrahydrofolate to 5,10-methenyltetrahydrofolate and then the hydrolysis of 5,10-methenyltetrahydrofolate to 10-formyltetrahydrofolate. The polypeptide is Bifunctional protein FolD (Rhodopseudomonas palustris (strain BisB5)).